Consider the following 576-residue polypeptide: Enolase 4 (576 aa).

The tract at residues 187-232 (ELRNEAMSEAPPQATPTSAPAKDKKGNDKGKKGNITENPLPPAEPP) is disordered. The segment covering 196–206 (APPQATPTSAP) has biased composition (low complexity). Residues 207–217 (AKDKKGNDKGK) are compositionally biased toward basic and acidic residues. Substrate is bound by residues Glu-302 and Lys-524.

The protein belongs to the enolase family.

It carries out the reaction (2R)-2-phosphoglycerate = phosphoenolpyruvate + H2O. It participates in carbohydrate degradation; glycolysis; pyruvate from D-glyceraldehyde 3-phosphate: step 4/5. This chain is Enolase 4 (eno4), found in Danio rerio (Zebrafish).